Here is a 131-residue protein sequence, read N- to C-terminus: Small ribosomal subunit protein uS8 (131 aa).

Belongs to the universal ribosomal protein uS8 family. As to quaternary structure, part of the 30S ribosomal subunit. Contacts proteins S5 and S12.

In terms of biological role, one of the primary rRNA binding proteins, it binds directly to 16S rRNA central domain where it helps coordinate assembly of the platform of the 30S subunit. This Methylococcus capsulatus (strain ATCC 33009 / NCIMB 11132 / Bath) protein is Small ribosomal subunit protein uS8.